Reading from the N-terminus, the 371-residue chain is Terpene cyclase 6 (371 aa).

Residues D144, N266, S270, and E274 each contribute to the Mg(2+) site. A D(D/E)XX(D/E) motif motif is present at residues 144–148 (DDVME). Positions 266–274 (NDLYSYDKE) match the NSE motif motif. The WxxxxxRY motif motif lies at 352–359 (HHATLGRY). (2E,6E)-farnesyl diphosphate contacts are provided by R358 and Y359.

This sequence belongs to the terpene synthase family. As to quaternary structure, homodimer. It depends on Mg(2+) as a cofactor.

It catalyses the reaction (2E,6E)-farnesyl diphosphate + H2O = (-)-alpha-acorenol + diphosphate. The protein operates within sesquiterpene biosynthesis. Its function is as follows. Terpene cyclase that catalyzes the cyclization of farnesyl diphosphate (FPP) to the spirocyclic sesquiterpene alpha-acorenol. This chain is Terpene cyclase 6, found in Gibberella fujikuroi (strain CBS 195.34 / IMI 58289 / NRRL A-6831) (Bakanae and foot rot disease fungus).